The following is a 492-amino-acid chain: Ethanolamine-phosphate phospho-lyase (492 aa).

Lysine 280 carries the N6-(pyridoxal phosphate)lysine modification. Residues 462 to 492 (ASDENGLVHPSNGNSHKHTSTIPLSKKTKRN) form a disordered region.

This sequence belongs to the class-III pyridoxal-phosphate-dependent aminotransferase family. As to quaternary structure, homotetramer. The cofactor is pyridoxal 5'-phosphate.

Its subcellular location is the mitochondrion. It carries out the reaction phosphoethanolamine + H2O = acetaldehyde + NH4(+) + phosphate. Catalyzes the pyridoxal-phosphate-dependent breakdown of phosphoethanolamine, converting it to ammonia, inorganic phosphate and acetaldehyde. The polypeptide is Ethanolamine-phosphate phospho-lyase (etnppl) (Danio rerio (Zebrafish)).